A 288-amino-acid chain; its full sequence is Prohibitin-1, mitochondrial (288 aa).

The Mitochondrial matrix portion of the chain corresponds to 1–10; the sequence is MNNVKVPKIP. Residues 11–30 form a helical; Signal-anchor for type II membrane protein membrane-spanning segment; the sequence is GGGAISTLLKVGIIGGLGLY. The Mitochondrial intermembrane segment spans residues 31–288; it reads GATHSLYNVE…GMNLDVDAKN (258 aa). Positions 186–219 form a coiled coil; the sequence is KEFTAAIEAKQVAAQEAERAKFIVEKAEQDKRSA.

Belongs to the prohibitin family. As to quaternary structure, component of a prohibitin multimeric complex in mitochondrial membranes. In terms of tissue distribution, mostly expressed in proliferative tissues, including vasculature, shoot and root apical tissues.

The protein localises to the mitochondrion inner membrane. Its function is as follows. Prohibitin probably acts as a holdase/unfoldase for the stabilization of newly synthesized mitochondrial proteins. The polypeptide is Prohibitin-1, mitochondrial (PHB1) (Arabidopsis thaliana (Mouse-ear cress)).